A 758-amino-acid polypeptide reads, in one-letter code: 5-methyltetrahydropteroyltriglutamate--homocysteine methyltransferase (758 aa).

Residues 16–19 (RELK) and Lys-112 each bind 5-methyltetrahydropteroyltri-L-glutamate. Residues 433–435 (IGS) and Glu-486 each bind L-homocysteine. Residues 433 to 435 (IGS) and Glu-486 contribute to the L-methionine site. 5-methyltetrahydropteroyltri-L-glutamate-binding positions include 517–518 (RC) and Trp-563. An L-homocysteine-binding site is contributed by Asp-601. An L-methionine-binding site is contributed by Asp-601. Glu-607 contributes to the 5-methyltetrahydropteroyltri-L-glutamate binding site. His-643, Cys-645, and Glu-667 together coordinate Zn(2+). His-696 acts as the Proton donor in catalysis. Residue Cys-728 participates in Zn(2+) binding.

This sequence belongs to the vitamin-B12 independent methionine synthase family. Zn(2+) is required as a cofactor.

The enzyme catalyses 5-methyltetrahydropteroyltri-L-glutamate + L-homocysteine = tetrahydropteroyltri-L-glutamate + L-methionine. Its pathway is amino-acid biosynthesis; L-methionine biosynthesis via de novo pathway; L-methionine from L-homocysteine (MetE route): step 1/1. Catalyzes the transfer of a methyl group from 5-methyltetrahydrofolate to homocysteine resulting in methionine formation. The chain is 5-methyltetrahydropteroyltriglutamate--homocysteine methyltransferase from Neisseria meningitidis serogroup C / serotype 2a (strain ATCC 700532 / DSM 15464 / FAM18).